We begin with the raw amino-acid sequence, 305 residues long: Probable lipid kinase YegS-like (305 aa).

The DAGKc domain maps to M1–I129. ATP contacts are provided by residues T39, G65–D71, and T92. The Mg(2+) site is built by L210, D213, and L215. E268 acts as the Proton acceptor in catalysis.

This sequence belongs to the diacylglycerol/lipid kinase family. YegS lipid kinase subfamily. It depends on Mg(2+) as a cofactor. Ca(2+) serves as cofactor.

The protein resides in the cytoplasm. Probably phosphorylates lipids; the in vivo substrate is unknown. This Pseudomonas fluorescens (strain Pf0-1) protein is Probable lipid kinase YegS-like.